The sequence spans 120 residues: Large ribosomal subunit protein uL18 (120 aa).

It belongs to the universal ribosomal protein uL18 family. As to quaternary structure, part of the 50S ribosomal subunit; part of the 5S rRNA/L5/L18/L25 subcomplex. Contacts the 5S and 23S rRNAs.

This is one of the proteins that bind and probably mediate the attachment of the 5S RNA into the large ribosomal subunit, where it forms part of the central protuberance. The chain is Large ribosomal subunit protein uL18 from Treponema denticola (strain ATCC 35405 / DSM 14222 / CIP 103919 / JCM 8153 / KCTC 15104).